Reading from the N-terminus, the 318-residue chain is Cytochrome f (318 aa).

An N-terminal signal peptide occupies residues 1 to 32 (MQNKNNYNWLKEWVIRSFLLLTLLTWPSVSNA). Heme-binding residues include Tyr33, Cys53, Cys56, and His57. The chain crosses the membrane as a helical span at residues 284–304 (IQGLLLFFASVVLAQIFLVLK).

This sequence belongs to the cytochrome f family. As to quaternary structure, the 4 large subunits of the cytochrome b6-f complex are cytochrome b6, subunit IV (17 kDa polypeptide, petD), cytochrome f and the Rieske protein, while the 4 small subunits are PetG, PetL, PetM and PetN. The complex functions as a dimer. It depends on heme as a cofactor.

Its subcellular location is the plastid. The protein resides in the chloroplast thylakoid membrane. Functionally, component of the cytochrome b6-f complex, which mediates electron transfer between photosystem II (PSII) and photosystem I (PSI), cyclic electron flow around PSI, and state transitions. The chain is Cytochrome f from Angiopteris evecta (Mule's foot fern).